The primary structure comprises 164 residues: C-phycoerythrin class 1 subunit alpha (164 aa).

2 residues coordinate (2R,3E)-phycoerythrobilin: Cys82 and Cys139.

This sequence belongs to the phycobiliprotein family. Heterodimer of an alpha and a beta chain. Contains one covalently linked bilin chromophore.

Its subcellular location is the cellular thylakoid membrane. Light-harvesting photosynthetic bile pigment-protein from the phycobiliprotein complex. This is C-phycoerythrin class 1 subunit alpha (cpeA) from Synechococcus sp. (strain WH7803).